The sequence spans 100 residues: Small ribosomal subunit protein uS14c (100 aa).

It belongs to the universal ribosomal protein uS14 family. Part of the 30S ribosomal subunit.

It localises to the plastid. The protein resides in the chloroplast. Functionally, binds 16S rRNA, required for the assembly of 30S particles. The sequence is that of Small ribosomal subunit protein uS14c from Pisum sativum (Garden pea).